Consider the following 439-residue polypeptide: Tol-Pal system protein TolB (439 aa).

Residues Met1–Ala21 form the signal peptide.

This sequence belongs to the TolB family. The Tol-Pal system is composed of five core proteins: the inner membrane proteins TolA, TolQ and TolR, the periplasmic protein TolB and the outer membrane protein Pal. They form a network linking the inner and outer membranes and the peptidoglycan layer.

It is found in the periplasm. Part of the Tol-Pal system, which plays a role in outer membrane invagination during cell division and is important for maintaining outer membrane integrity. This is Tol-Pal system protein TolB from Rhizorhabdus wittichii (strain DSM 6014 / CCUG 31198 / JCM 15750 / NBRC 105917 / EY 4224 / RW1) (Sphingomonas wittichii).